A 159-amino-acid polypeptide reads, in one-letter code: Transcription elongation factor GreA (159 aa).

Residues 7-72 are a coiled coil; that stretch reads MTVRGAEKLR…IQEIESKLSN (66 aa).

This sequence belongs to the GreA/GreB family.

Functionally, necessary for efficient RNA polymerase transcription elongation past template-encoded arresting sites. The arresting sites in DNA have the property of trapping a certain fraction of elongating RNA polymerases that pass through, resulting in locked ternary complexes. Cleavage of the nascent transcript by cleavage factors such as GreA or GreB allows the resumption of elongation from the new 3'terminus. GreA releases sequences of 2 to 3 nucleotides. The sequence is that of Transcription elongation factor GreA from Buchnera aphidicola subsp. Schizaphis graminum (strain Sg).